We begin with the raw amino-acid sequence, 287 residues long: Small ribosomal subunit protein uS2 (287 aa).

Over residues 254 to 277 the composition is skewed to low complexity; it reads LASATASATPSATASTTALTDAPA. Residues 254 to 287 form a disordered region; sequence LASATASATPSATASTTALTDAPAGATEPTTDAS.

It belongs to the universal ribosomal protein uS2 family.

The chain is Small ribosomal subunit protein uS2 (rpsB) from Mycobacterium tuberculosis (strain CDC 1551 / Oshkosh).